A 91-amino-acid polypeptide reads, in one-letter code: Small ribosomal subunit protein bS16 (91 aa).

This sequence belongs to the bacterial ribosomal protein bS16 family.

The polypeptide is Small ribosomal subunit protein bS16 (Staphylococcus haemolyticus (strain JCSC1435)).